Consider the following 456-residue polypeptide: Anthocyanidin 3-O-galactosyltransferase F3GT1 (456 aa).

An anthocyanidin is bound by residues Ser-20, His-22, and Gln-83. The active-site Proton acceptor is His-22. Asp-118 functions as the Charge relay in the catalytic mechanism. His-150 contributes to the an anthocyanidin binding site. Residues Ser-281, Trp-333, Ala-334, His-351, Asn-355, Ser-356, and Glu-359 each coordinate UDP. Gly-374 serves as a coordination point for an anthocyanidin.

Belongs to the UDP-glycosyltransferase family. As to expression, expressed at low levels in stems and leaves. Expressed in ovaries.

The catalysed reaction is cyanidin + UDP-alpha-D-galactose = cyanidin 3-O-beta-D-galactoside + UDP + H(+). It participates in pigment biosynthesis; anthocyanin biosynthesis. Involved in anthocyanin biosynthesis by catalyzing the galactosylation of cyanidin. Required for the accumulation of anthocyanin in red-fleshed kiwifruit varieties. Seems to be the key enzyme regulating the accumulation of anthocyanin in red-fleshed kiwi fruits. The chain is Anthocyanidin 3-O-galactosyltransferase F3GT1 from Actinidia chinensis var. chinensis (Chinese soft-hair kiwi).